A 167-amino-acid chain; its full sequence is 2-C-methyl-D-erythritol 2,4-cyclodiphosphate synthase (167 aa).

A divalent metal cation-binding residues include D9 and H11. 4-CDP-2-C-methyl-D-erythritol 2-phosphate contacts are provided by residues 9–11 (DVH) and 35–36 (HS). H43 contacts a divalent metal cation. 4-CDP-2-C-methyl-D-erythritol 2-phosphate-binding positions include 57–59 (DIG), 62–66 (FPDTD), 133–136 (TTTE), F140, and R143.

It belongs to the IspF family. As to quaternary structure, homotrimer. Requires a divalent metal cation as cofactor.

The catalysed reaction is 4-CDP-2-C-methyl-D-erythritol 2-phosphate = 2-C-methyl-D-erythritol 2,4-cyclic diphosphate + CMP. Its pathway is isoprenoid biosynthesis; isopentenyl diphosphate biosynthesis via DXP pathway; isopentenyl diphosphate from 1-deoxy-D-xylulose 5-phosphate: step 4/6. In terms of biological role, involved in the biosynthesis of isopentenyl diphosphate (IPP) and dimethylallyl diphosphate (DMAPP), two major building blocks of isoprenoid compounds. Catalyzes the conversion of 4-diphosphocytidyl-2-C-methyl-D-erythritol 2-phosphate (CDP-ME2P) to 2-C-methyl-D-erythritol 2,4-cyclodiphosphate (ME-CPP) with a corresponding release of cytidine 5-monophosphate (CMP). The chain is 2-C-methyl-D-erythritol 2,4-cyclodiphosphate synthase from Glaesserella parasuis serovar 5 (strain SH0165) (Haemophilus parasuis).